Here is a 224-residue protein sequence, read N- to C-terminus: Proteasome subunit beta (224 aa).

The propeptide at 1-6 is removed in mature form; by autocatalysis; it reads MDVMKG. T7 serves as the catalytic Nucleophile.

It belongs to the peptidase T1B family. As to quaternary structure, the 20S proteasome core is composed of 14 alpha and 14 beta subunits that assemble into four stacked heptameric rings, resulting in a barrel-shaped structure. The two inner rings, each composed of seven catalytic beta subunits, are sandwiched by two outer rings, each composed of seven alpha subunits. The catalytic chamber with the active sites is on the inside of the barrel. Has a gated structure, the ends of the cylinder being occluded by the N-termini of the alpha-subunits. Is capped at one or both ends by the proteasome regulatory ATPase, PAN.

It is found in the cytoplasm. It catalyses the reaction Cleavage of peptide bonds with very broad specificity.. Its activity is regulated as follows. The formation of the proteasomal ATPase PAN-20S proteasome complex, via the docking of the C-termini of PAN into the intersubunit pockets in the alpha-rings, triggers opening of the gate for substrate entry. Interconversion between the open-gate and close-gate conformations leads to a dynamic regulation of the 20S proteasome proteolysis activity. Component of the proteasome core, a large protease complex with broad specificity involved in protein degradation. The M.jannaschii proteasome is able to cleave oligopeptides after Glu, Asp, Tyr, Phe, Trp, slightly after Arg, but not after Ala. Thus, displays caspase-like and chymotrypsin-like activities and low level of trypsin-like activity. The polypeptide is Proteasome subunit beta (Methanocaldococcus jannaschii (strain ATCC 43067 / DSM 2661 / JAL-1 / JCM 10045 / NBRC 100440) (Methanococcus jannaschii)).